The following is a 1030-amino-acid chain: Protein KRBA1 (1030 aa).

Disordered regions lie at residues 27-56, 80-208, 225-255, 281-505, and 634-788; these read EPGRAVGGGSHADEGQEPAGCGDPQGGQPR, KGAM…NSPL, HPETSPSFLPPLPSLGTSRLTRADLGPGSPP, EAQD…GLEN, and GGPS…PASS. A Phosphoserine modification is found at S101. Low complexity predominate over residues 102 to 114; sequence PEAAAAREPCPLR. A compositionally biased stretch (polar residues) spans 124-143; that stretch reads PTSQPHLATTPTDSSCSSGP. Residues 157 to 168 show a composition bias toward basic and acidic residues; the sequence is TADKPWPTRKEG. Phosphoserine occurs at positions 177, 182, 184, 229, 253, and 355. The segment covering 372–389 has biased composition (low complexity); the sequence is PEAQAASASSSPLEALEA. Residues 397 to 418 show a composition bias toward polar residues; that stretch reads NGSSPSQLPPTSCSQNPQPGDS. Over residues 419–437 the composition is skewed to basic and acidic residues; sequence RSQKPELQPHRSHSEEATR. Composition is skewed to low complexity over residues 485 to 502 and 642 to 651; these read QGQHPGKGSPPGSSPLQG and PGSSSSFSGS. Over residues 654 to 674 the composition is skewed to basic and acidic residues; it reads EDPRPEPDLWKPLPQERDRLP. Residues 689 to 698 are compositionally biased toward gly residues; sequence TPAGSSGGSP. Positions 760 to 784 are enriched in pro residues; the sequence is QGPPELPSESPPPELPPPEAAPPVL. Positions 799–832 form a coiled coil; sequence LQQELHSLGAALAEKLDRLATALAGLAQEVATMR. The span at 870–887 shows a compositional bias: basic residues; the sequence is RHLPYWRQKGPTRPKPKI. Positions 870–1030 are disordered; that stretch reads RHLPYWRQKG…EHRDPRWGAH (161 aa). A compositionally biased stretch (pro residues) spans 913–923; sequence PLPPDAPPAEP. Low complexity-rich tracts occupy residues 929-953 and 966-984; these read SSSQQLLSSTPSCHAAPPAHPLLAH and PAALPLQGASPPAASADAD. Positions 1019-1030 are enriched in basic and acidic residues; that stretch reads GGEHRDPRWGAH.

Expressed in brain (cerebellum).

The protein is Protein KRBA1 (KRBA1) of Homo sapiens (Human).